The primary structure comprises 590 residues: MPKHYRPTGKKKEGNAARYMTRSQALKHLQVNLNLFRRLCIVKGIFPREPKKKIKGNHHTYYHVKDIAFLMHEPLLEKFREIKTYQKKVKKAKAKKNEELARLLLTRQPTYKLDRLIRERYPTFIDALRDLDDCLTMVHLFAVLPASDRENLEVKRVHNCRRLTHEWQAYISRSHALRKVFVSVKGIYYQAEIEGQKITWLTPHAIQQVFTNDVDFGVLLTFLEFYETLLAFINFKLYHSLNVKYPPILDSRLEALAADLYALSRYIDASSRGMAVEPKVDASFSSQSNDREESELRLAQLQHQLPSSEPGALMHLVADNNKEVEEDEETRVCKSLFKDLKFFLSREVPRESLQLVITAFGGMVSWEGEGAPFKEDDESITHHIIDKPSAGHLYLSRVYVQPQWIYDCVNARIILPTEKYLVGRIPPPHLSPFVDNEAEGYVPDYAETIKRLQAAARNEVLPLPGVGKEDLEDPQNLLYAGVMSRAEEAEAAKNKKKMAAQEKQYHEELKMEINGSKDVVAPVLAEGEGEESVPDAMQIAQEDADMPKVLMSRKKRKLYDAMKISQSRKRSGVEIIEQRKKRLNDTQPSS.

One can recognise a BRCT domain in the interval 332–422; that stretch reads VCKSLFKDLK…IILPTEKYLV (91 aa). The interval 561-590 is disordered; that stretch reads AMKISQSRKRSGVEIIEQRKKRLNDTQPSS.

This sequence belongs to the pescadillo family. In terms of assembly, interacts with BOP1 and WDR12. Interacts with NSN1. Expressed in shoot and root apical meristems, epidermal cells and vasculature of developing leaves, trichome progenitor cells, young flowers, developing pollen grains and ovules, and mature pollen grains.

It localises to the nucleus. Its subcellular location is the nucleolus. It is found in the nucleoplasm. In terms of biological role, required for maturation of ribosomal RNAs and formation of the large ribosomal subunit. Plays an essential role in cell growth and survival through its regulation of ribosome biogenesis and mitotic progression. Required for normal root cell growth and differentiation. This Arabidopsis thaliana (Mouse-ear cress) protein is Pescadillo homolog.